A 230-amino-acid polypeptide reads, in one-letter code: Large ribosomal subunit protein uL1 (230 aa).

The protein belongs to the universal ribosomal protein uL1 family. Part of the 50S ribosomal subunit.

In terms of biological role, binds directly to 23S rRNA. The L1 stalk is quite mobile in the ribosome, and is involved in E site tRNA release. Protein L1 is also a translational repressor protein, it controls the translation of the L11 operon by binding to its mRNA. This chain is Large ribosomal subunit protein uL1, found in Granulibacter bethesdensis (strain ATCC BAA-1260 / CGDNIH1).